A 362-amino-acid chain; its full sequence is S-adenosylmethionine-dependent nucleotide dehydratase RSAD2 (362 aa).

The tract at residues 49–71 (QQLQGKTEAGEPPRAQEDSHLPT) is disordered. The span at 56–68 (EAGEPPRAQEDSH) shows a compositional bias: basic and acidic residues. The 221-residue stretch at 70–290 (PTTPTSVNYH…LDRHKDVSCL (221 aa)) folds into the Radical SAM core domain. 3 residues coordinate [4Fe-4S] cluster: cysteine 84, cysteine 88, and cysteine 91. The residue at position 198 (lysine 198) is an N6-acetyllysine. Lysine 207 is covalently cross-linked (Glycyl lysine isopeptide (Lys-Gly) (interchain with G-Cter in ubiquitin)).

The protein belongs to the radical SAM superfamily. RSAD2 family. Homodimer. Interacts with IRAK1 and TRAF6. Interacts with FPPS. Interacts with HADHB. Interacts (via C-terminus) with VAPA/VAP33 (via C-terminus). [4Fe-4S] cluster is required as a cofactor. Acetylated by HAT1. HAT1-mediated acetylation of Lys-198 in turn recruits UBE4A that stimulates RSAD2 polyubiquitination leading to proteasomal degradation. Post-translationally, 'Lys-6'-linked polyubiquitination at Lys-207 leads to RSAD2 protein degradation.

The protein resides in the endoplasmic reticulum membrane. It is found in the golgi apparatus. The protein localises to the endoplasmic reticulum. Its subcellular location is the lipid droplet. It localises to the mitochondrion. The protein resides in the mitochondrion inner membrane. It is found in the mitochondrion outer membrane. The enzyme catalyses CTP + AH2 + S-adenosyl-L-methionine = 3'-deoxy-3',4'-didehydro-CTP + 5'-deoxyadenosine + L-methionine + A + H2O + H(+). With respect to regulation, IRAK1 and TRAF6 synergistically activate RSAD2 increasing its activity with CTP as substrate about 10-fold. Its function is as follows. Interferon-inducible antiviral protein which plays a major role in the cell antiviral state induced by type I and type II interferon. Catalyzes the conversion of cytidine triphosphate (CTP) to 3'-deoxy-3',4'-didehydro-CTP (ddhCTP) via a SAM-dependent radical mechanism. In turn, ddhCTP acts as a chain terminator for the RNA-dependent RNA polymerases from multiple viruses and directly inhibits viral replication. Therefore, inhibits a wide range of DNA and RNA viruses. Also promotes TLR7 and TLR9-dependent production of IFN-beta production in plasmacytoid dendritic cells (pDCs) by facilitating 'Lys-63'-linked ubiquitination of IRAK1 by TRAF6. Plays a role in CD4+ T-cells activation and differentiation. Facilitates T-cell receptor (TCR)-mediated GATA3 activation and optimal T-helper 2 (Th2) cytokine production by modulating NFKB1 and JUNB activities. Can inhibit secretion of soluble proteins. The chain is S-adenosylmethionine-dependent nucleotide dehydratase RSAD2 from Sus scrofa (Pig).